Here is a 272-residue protein sequence, read N- to C-terminus: Orotidine 5'-phosphate decarboxylase (272 aa).

Residue K95 is the Proton donor of the active site.

This sequence belongs to the OMP decarboxylase family. Type 2 subfamily.

It carries out the reaction orotidine 5'-phosphate + H(+) = UMP + CO2. It functions in the pathway pyrimidine metabolism; UMP biosynthesis via de novo pathway; UMP from orotate: step 2/2. The protein is Orotidine 5'-phosphate decarboxylase of Bordetella petrii (strain ATCC BAA-461 / DSM 12804 / CCUG 43448).